Consider the following 387-residue polypeptide: Deoxyguanosinetriphosphate triphosphohydrolase-like protein (387 aa).

A disordered region spans residues 1–26 (MTAPYASDPQRARGRRVKEEESTFRS). Over residues 17 to 26 (VKEEESTFRS) the composition is skewed to basic and acidic residues. The HD domain maps to 62–198 (RLTHSIEVAQ…AAIADDVAYN (137 aa)).

The protein belongs to the dGTPase family. Type 2 subfamily.

This is Deoxyguanosinetriphosphate triphosphohydrolase-like protein from Roseobacter denitrificans (strain ATCC 33942 / OCh 114) (Erythrobacter sp. (strain OCh 114)).